A 243-amino-acid polypeptide reads, in one-letter code: Transcription factor TFIIS homolog (243 aa).

A TFIIS central domain is found at 77–201 (MRDIIQMMFF…SQQKVAEKTS (125 aa)). The segment at 202–242 (QLYKCPNCKQRMCTYREVQTRALDEPSTIYCTCKKCGHEFI) adopts a TFIIS-type zinc-finger fold. The Zn(2+) site is built by Cys-206, Cys-209, Cys-234, and Cys-237.

The protein belongs to the TFS-II family.

Functionally, putative initiation factor. Necessary for efficient transcription elongation past template-encoded arresting sites. This African swine fever virus (isolate Pig/Kenya/KEN-50/1950) (ASFV) protein is Transcription factor TFIIS homolog.